An 874-amino-acid polypeptide reads, in one-letter code: MLAREIREKFLKFFESKGHKILPSASLIPANDPSLLWTAAGMVPFKPYFTGAAVPEVRRVTTCQKCLRTPDIESVGRTARHHTFFEMLGNFSFGDYFKKEAITWAWEFVTEHLGISKDKLYITIYLDDDEAFDIWHNVVGVPAERITRLGKDTNFWEIGVGPCGPCSEIYVDLGPEKGCGSPDCGVACDCGRFLEIWNLVFIQFFRDEQGNYTPLEQKGIDTGMGLERVASVLQGVPSNFDTDIFREIMDYAAQILGVKYGYDEKVDVALKVIADHTRAITFAITDGALPSNEGRGYVIRRLLRRALRFGRLLDREEPFLHLVAAKVIEQMGDVYPELREKAEHTLKIIKLEEEKFRETLNQGLSMLAELMERLTQEGKKEIPGHLAFKLYDTYGFPIELTKEIAEEKGFTVDEEGFKQQMEEQRRRAREAREDVDYLSTRDAFLKQLKEELGEVTFVGYEKLSESTEIIAIIKNGQKVESLAAEEEGEIITRVTPFYPEGGGQVADKGEILGDGFKLSVLDVEKPLSDFILHKVKVVEGSVKVGDKATLMVDETTRMSTARNHTATHLLHKALKMVLGEHVNQAGSLVTPERLRFDFTHFEGVSDEDLRKIENIVNEAILRNLLVQIDYTTLDEARKAGVIALFDEKYGDLVRVVKIGEFSAELCGGTHVSSTGVIGFFKILGESSIGAGVRRIEALTGLGALEYVRSLEDTLQKATEPYKCTFAELPEKISNTLKTLKEKDREIEALMQKIASIEVKSLLNSVREIKGVKVLSAIIDGADMEGLRKAYDVVKASLANYVVLLAGVKDGKVNFLAGVDKNLTDKYHAGELVKEAAKIAGGGGGGRPDMAQAGGKNPEKVKEALQVIDAYVQSK.

Residues His-564, His-568, Cys-666, and His-670 each coordinate Zn(2+).

This sequence belongs to the class-II aminoacyl-tRNA synthetase family. Zn(2+) serves as cofactor.

The protein localises to the cytoplasm. It catalyses the reaction tRNA(Ala) + L-alanine + ATP = L-alanyl-tRNA(Ala) + AMP + diphosphate. Its function is as follows. Catalyzes the attachment of alanine to tRNA(Ala) in a two-step reaction: alanine is first activated by ATP to form Ala-AMP and then transferred to the acceptor end of tRNA(Ala). Also edits incorrectly charged Ser-tRNA(Ala) and Gly-tRNA(Ala) via its editing domain. The sequence is that of Alanine--tRNA ligase from Carboxydothermus hydrogenoformans (strain ATCC BAA-161 / DSM 6008 / Z-2901).